A 136-amino-acid polypeptide reads, in one-letter code: Large ribosomal subunit protein bL17 (136 aa).

Belongs to the bacterial ribosomal protein bL17 family. Part of the 50S ribosomal subunit. Contacts protein L32.

The polypeptide is Large ribosomal subunit protein bL17 (Rickettsia peacockii (strain Rustic)).